Here is a 783-residue protein sequence, read N- to C-terminus: Cation/H(+) antiporter 2 (783 aa).

The next 12 membrane-spanning stretches (helical) occupy residues 19 to 39, 43 to 63, 81 to 101, 121 to 141, 145 to 165, 186 to 206, 208 to 228, 242 to 262, 300 to 320, 323 to 343, 355 to 375, and 391 to 411; these read LNTM…FYLL, CGQA…PVLL, YYSF…GLEV, FVVS…LFGI, YFTF…PVVV, ALFI…FISG, IILE…INMV, YLSK…GITI, EFVL…IALT, FYLG…IGVI, YWLF…LLLD, and MMVA…SFLL.

This sequence belongs to the monovalent cation:proton antiporter 2 (CPA2) transporter (TC 2.A.37) family. CHX (TC 2.A.37.4) subfamily. Specifically expressed in pollen.

Its subcellular location is the membrane. In terms of biological role, may operate as a cation/H(+) antiporter. The sequence is that of Cation/H(+) antiporter 2 (CHX2) from Arabidopsis thaliana (Mouse-ear cress).